Reading from the N-terminus, the 305-residue chain is MRIVFMGTPGFAEVILRALVENKNNHIEVVGLFTQRDKPFGRKKELKAPETKTYILENRLNIPIFQPQSLKEPEVQILKDLKPDFIVVVAYGKILPKEILAIAPCINVHASLLPKYRGASPIHEMILNDDKIYGISTMLMDLELDSGDILESASFLREDYLDLDALSLKLAHMGATLLLSTLKNFHSITRKPQDHTQATFCKKITKADGLVGFKDAKNLFLKSLAFKSWPEIFLENNLKLLEVELVENEKSHKEGEILRIDEKGVLVGCLKGSVCIAWLQAVGKKPLKAKDYLNGKRLKVGGILA.

111 to 114 provides a ligand contact to (6S)-5,6,7,8-tetrahydrofolate; sequence SLLP.

The protein belongs to the Fmt family.

It carries out the reaction L-methionyl-tRNA(fMet) + (6R)-10-formyltetrahydrofolate = N-formyl-L-methionyl-tRNA(fMet) + (6S)-5,6,7,8-tetrahydrofolate + H(+). Its function is as follows. Attaches a formyl group to the free amino group of methionyl-tRNA(fMet). The formyl group appears to play a dual role in the initiator identity of N-formylmethionyl-tRNA by promoting its recognition by IF2 and preventing the misappropriation of this tRNA by the elongation apparatus. The polypeptide is Methionyl-tRNA formyltransferase (Helicobacter pylori (strain P12)).